The chain runs to 190 residues: Prostaglandin-H2 D-isomerase (190 aa).

A signal peptide spans 1 to 22 (MATHHTLWMGLALLGVLGDLQA). Ser29 is a glycosylation site (O-linked (GalNAc...) serine). An N-linked (GlcNAc...) (complex) asparagine glycan is attached at Asn51. Cys65 acts as the Nucleophile in catalysis. Asn78 carries N-linked (GlcNAc...) (complex) asparagine glycosylation. Cysteines 89 and 186 form a disulfide.

This sequence belongs to the calycin superfamily. Lipocalin family. In terms of assembly, monomer. Post-translationally, N- and O-glycosylated. Both N-glycosylation recognition sites are almost quantitatively occupied by N-glycans of the biantennary complex type, with a considerable proportion of structures bearing a bisecting GlcNAc. N-glycan at Asn-78: dHex1Hex5HexNAc4. Agalacto structure as well as sialylated and nonsialylated oligosaccharides bearing alpha2-3- and/or alpha2-6-linked NeuNAc are present. Abundant in the brain and CNS, where it is expressed in tissues of the blood-brain barrier and secreted into the cerebro-spinal fluid. Abundantly expressed in the heart. In the male reproductive system, it is expressed in the testis, epididymis and prostate, and is secreted into the seminal fluid. Expressed in the eye and secreted into the aqueous humor. Lower levels detected in various tissue fluids such as serum, normal urine, ascitic fluid and tear fluid. Also found in a number of other organs including ovary, fimbriae of the fallopian tubes, kidney, leukocytes.

Its subcellular location is the rough endoplasmic reticulum. It localises to the nucleus membrane. It is found in the golgi apparatus. The protein localises to the cytoplasm. The protein resides in the perinuclear region. Its subcellular location is the secreted. The enzyme catalyses prostaglandin H2 = prostaglandin D2. Its function is as follows. Catalyzes the conversion of PGH2 to PGD2, a prostaglandin involved in smooth muscle contraction/relaxation and a potent inhibitor of platelet aggregation. Involved in a variety of CNS functions, such as sedation, NREM sleep and PGE2-induced allodynia, and may have an anti-apoptotic role in oligodendrocytes. Binds small non-substrate lipophilic molecules, including biliverdin, bilirubin, retinal, retinoic acid and thyroid hormone, and may act as a scavenger for harmful hydrophobic molecules and as a secretory retinoid and thyroid hormone transporter. Possibly involved in development and maintenance of the blood-brain, blood-retina, blood-aqueous humor and blood-testis barrier. It is likely to play important roles in both maturation and maintenance of the central nervous system and male reproductive system. Involved in PLA2G3-dependent maturation of mast cells. PLA2G3 is secreted by immature mast cells and acts on nearby fibroblasts upstream to PTDGS to synthesize PGD2, which in turn promotes mast cell maturation and degranulation via PTGDR. In Homo sapiens (Human), this protein is Prostaglandin-H2 D-isomerase (PTGDS).